A 752-amino-acid polypeptide reads, in one-letter code: Double zinc ribbon and ankyrin repeat-containing protein 1 (752 aa).

Residues S160 and S182 each carry the phosphoserine modification. Residues I164–H187 form a disordered region. Polar residues predominate over residues R174–P183. DZANK-type zinc fingers lie at residues C211 to C270 and C339 to G387. ANK repeat units follow at residues E605 to C636 and D640 to Q669.

As to quaternary structure, interacts with NINL isoform 2. Associates with DYNC1H1 and multiple dynein intermediate and light chains as well as actin-binding proteins.

Its subcellular location is the cytoplasm. The protein localises to the cytoskeleton. The protein resides in the microtubule organizing center. It is found in the centrosome. It localises to the cilium basal body. Its function is as follows. Involved in vesicle transport in photoreceptor cells. In Homo sapiens (Human), this protein is Double zinc ribbon and ankyrin repeat-containing protein 1.